Reading from the N-terminus, the 162-residue chain is Calcium vector protein (162 aa).

The residue at position 2 (alanine 2) is an N-acetylalanine. EF-hand domains follow at residues 12 to 47, 49 to 84, 86 to 121, and 123 to 158; these read EEKD…LGQT, TKRE…KWVR, DDEE…VGEE, and LTDA…SKNA. Lysine 96 bears the N6,N6,N6-trimethyllysine mark. Residues aspartate 99, asparagine 101, aspartate 103, and glutamate 110 each coordinate Ca(2+). N6,N6,N6-trimethyllysine is present on lysine 117. Ca(2+)-binding residues include aspartate 136, aspartate 138, asparagine 140, and glutamate 147.

The protein localises to the cytoplasm. Functionally, the exact function of this protein is not yet known. It interacts with CAVPT, a protein also of unknown function, in a calcium-dependent way. This protein binds two calcium ions. This is Calcium vector protein from Branchiostoma lanceolatum (Common lancelet).